Consider the following 353-residue polypeptide: Ion-translocating oxidoreductase complex subunit D (353 aa).

Helical transmembrane passes span 20–40 (IMLL…YYFG), 44–64 (IIQV…ILHL), 77–108 (SALL…AIII), and 123–143 (PAMV…TSWL). Thr187 is subject to FMN phosphoryl threonine. The next 4 helical transmembrane spans lie at 214-234 (VIAG…GVFL), 242-262 (WHIP…GWLL), 267-287 (LVTP…FFIA), and 301-318 (LLYG…RSYG).

Belongs to the NqrB/RnfD family. As to quaternary structure, the complex is composed of six subunits: RnfA, RnfB, RnfC, RnfD, RnfE and RnfG. Requires FMN as cofactor.

It is found in the cell inner membrane. Functionally, part of a membrane-bound complex that couples electron transfer with translocation of ions across the membrane. The polypeptide is Ion-translocating oxidoreductase complex subunit D (Erwinia tasmaniensis (strain DSM 17950 / CFBP 7177 / CIP 109463 / NCPPB 4357 / Et1/99)).